The following is a 65-amino-acid chain: MKVKMKTKRGAAKRFKKTANGFKRKQAFKRHILTKKSPKRIRQLRGTKLVHVADVAAVRRMCPYI.

Belongs to the bacterial ribosomal protein bL35 family.

The chain is Large ribosomal subunit protein bL35 from Psychrobacter sp. (strain PRwf-1).